We begin with the raw amino-acid sequence, 366 residues long: Acetylserotonin O-methyltransferase 3 (366 aa).

S-adenosyl-L-homocysteine is bound by residues Gly209, Asp232, Asp253, and Lys267. His271 serves as the catalytic Proton acceptor. Active-site residues include Glu302 and Glu332.

This sequence belongs to the class I-like SAM-binding methyltransferase superfamily. Cation-independent O-methyltransferase family. Homodimer. In terms of tissue distribution, expressed at low levels in roots, shoots, leaves, stems and flowers.

It is found in the cytoplasm. It catalyses the reaction N-acetylserotonin + S-adenosyl-L-methionine = melatonin + S-adenosyl-L-homocysteine + H(+). Its pathway is aromatic compound metabolism; melatonin biosynthesis; melatonin from serotonin: step 1/2. In terms of biological role, methyltransferase which catalyzes the transfer of a methyl group onto N-acetylserotonin, producing melatonin (N-acetyl-5-methoxytryptamine). This chain is Acetylserotonin O-methyltransferase 3, found in Oryza sativa subsp. japonica (Rice).